The primary structure comprises 137 residues: Small ribosomal subunit protein bS16m (137 aa).

Residues 1 to 34 (MVHLTTLLCKAYRGGHLTIRLALGGCTNRPFYRI) constitute a mitochondrion transit peptide. A Phosphothreonine modification is found at Thr130.

Belongs to the bacterial ribosomal protein bS16 family. Component of the mitochondrial small ribosomal subunit (mt-SSU). Mature mammalian 55S mitochondrial ribosomes consist of a small (28S) and a large (39S) subunit. The 28S small subunit contains a 12S ribosomal RNA (12S mt-rRNA) and 30 different proteins. The 39S large subunit contains a 16S rRNA (16S mt-rRNA), a copy of mitochondrial valine transfer RNA (mt-tRNA(Val)), which plays an integral structural role, and 52 different proteins. bS16m has a zinc binding site.

The protein localises to the mitochondrion. In Homo sapiens (Human), this protein is Small ribosomal subunit protein bS16m (MRPS16).